We begin with the raw amino-acid sequence, 208 residues long: Protein-L-isoaspartate O-methyltransferase (208 aa).

Residue S59 is part of the active site.

The protein belongs to the methyltransferase superfamily. L-isoaspartyl/D-aspartyl protein methyltransferase family.

It localises to the cytoplasm. It carries out the reaction [protein]-L-isoaspartate + S-adenosyl-L-methionine = [protein]-L-isoaspartate alpha-methyl ester + S-adenosyl-L-homocysteine. Its function is as follows. Catalyzes the methyl esterification of L-isoaspartyl residues in peptides and proteins that result from spontaneous decomposition of normal L-aspartyl and L-asparaginyl residues. It plays a role in the repair and/or degradation of damaged proteins. In Vibrio vulnificus (strain CMCP6), this protein is Protein-L-isoaspartate O-methyltransferase.